A 311-amino-acid polypeptide reads, in one-letter code: Malate dehydrogenase (311 aa).

Residues 7 to 13 (GAAGGIG) and D34 contribute to the NAD(+) site. Residues R81 and R87 each coordinate substrate. NAD(+)-binding positions include N94 and 117–119 (ITN). 2 residues coordinate substrate: N119 and R153. The active-site Proton acceptor is the H177. NAD(+) is bound at residue M227.

The protein belongs to the LDH/MDH superfamily. MDH type 1 family. In terms of assembly, homodimer.

It carries out the reaction (S)-malate + NAD(+) = oxaloacetate + NADH + H(+). Its function is as follows. Catalyzes the reversible oxidation of malate to oxaloacetate. This is Malate dehydrogenase from Shewanella frigidimarina (strain NCIMB 400).